The chain runs to 524 residues: Cytochrome P450 monooxygenase drtD (524 aa).

The helical transmembrane segment at serine 2–leucine 22 threads the bilayer. Cysteine 418 provides a ligand contact to heme.

It belongs to the cytochrome P450 family. Heme serves as cofactor.

The protein resides in the membrane. It functions in the pathway secondary metabolite biosynthesis; terpenoid biosynthesis. In terms of biological role, cytochrome P450 monooxygenase; part of the gene cluster that mediates the biosynthesis of various drimane-type sesquiterpene esters, compounds that exhibit diverse biological activities and are widely present in eukaryotes. The pathway begins with the synthesis of the backbone drimenol by the terpene cyclase drtB using farnesyl pyrophosphate (FPP) as substrate. The cytochrome P450 monooxygenase drtD is then responsible for the hydroxylations at C-6, C-9 and C-12, as well as the oxidation of hydroxyl groups at C-6 and C-11 to a ketone and an aldehyde, respectively. Then, the biosynthesis can go in two directions, either the hydroxylated drimenol is further hydroxylated at C-2 and C-3 by an enzyme(s) not associated with the drt cluster, or the FAD-binding oxidoreductase drtC further oxidizes C-11 or C-12 to form the butyrolactone ring. DrtB, drtD and drtC are solely responsible for the formation of the different drimane structures observed during drimane sesquiterpenes biosynthesis. The polyketide synthase drtA synthesizes different lengths (C6 and C8) of PKS chains, which are then oxidized to varying degrees by the short-chain dehydrogenase drtF. Finally, these PKS chains are transferred onto drimane sesquiterpenes by the acyltransferase drtE, forming the sesquiterpene esters. In addition to the different fatty acyl-CoA chains produced by drtA, drtE is also able to use cinnamoyl-CoA as a substrate. The chain is Cytochrome P450 monooxygenase drtD from Aspergillus calidoustus.